We begin with the raw amino-acid sequence, 407 residues long: Arginine deiminase (407 aa).

C397 serves as the catalytic Amidino-cysteine intermediate.

The protein belongs to the arginine deiminase family.

Its subcellular location is the cytoplasm. The catalysed reaction is L-arginine + H2O = L-citrulline + NH4(+). It participates in amino-acid degradation; L-arginine degradation via ADI pathway; carbamoyl phosphate from L-arginine: step 1/2. The polypeptide is Arginine deiminase (arcA) (Escherichia coli O6:H1 (strain CFT073 / ATCC 700928 / UPEC)).